The chain runs to 396 residues: Elongation factor Tu (396 aa).

In terms of domain architecture, tr-type G spans 10–206 (KPHVNIGTIG…AVDESVPDPV (197 aa)). The segment at 19 to 26 (GHVDHGKT) is G1. 19-26 (GHVDHGKT) contacts GTP. Thr-26 lines the Mg(2+) pocket. Positions 62 to 66 (GITIN) are G2. The segment at 83–86 (DAPG) is G3. GTP is bound by residues 83–87 (DAPGH) and 138–141 (NKAD). The segment at 138-141 (NKAD) is G4. Positions 176–178 (SGL) are G5.

Belongs to the TRAFAC class translation factor GTPase superfamily. Classic translation factor GTPase family. EF-Tu/EF-1A subfamily. In terms of assembly, monomer.

Its subcellular location is the cytoplasm. It catalyses the reaction GTP + H2O = GDP + phosphate + H(+). GTP hydrolase that promotes the GTP-dependent binding of aminoacyl-tRNA to the A-site of ribosomes during protein biosynthesis. The polypeptide is Elongation factor Tu (Arthrobacter sp. (strain FB24)).